Reading from the N-terminus, the 76-residue chain is Omega-conotoxin-like TeA61 (76 aa).

An N-terminal signal peptide occupies residues 1 to 22 (MKLTCMMIVAVLFLTAWTFATA). Residues 23–51 (DDSSNGLGNLFLKAHHEMKNPEASKLNER) constitute a propeptide that is removed on maturation. Cystine bridges form between Cys-52/Cys-67, Cys-59/Cys-70, and Cys-66/Cys-75.

This sequence belongs to the conotoxin O1 superfamily. As to expression, expressed by the venom duct.

It localises to the secreted. Functionally, omega-conotoxins act at presynaptic membranes, they bind and block voltage-gated calcium channels (Cav). This Conus textile (Cloth-of-gold cone) protein is Omega-conotoxin-like TeA61.